A 122-amino-acid polypeptide reads, in one-letter code: Large ribosomal subunit protein uL14 (122 aa).

It belongs to the universal ribosomal protein uL14 family. Part of the 50S ribosomal subunit. Forms a cluster with proteins L3 and L19. In the 70S ribosome, L14 and L19 interact and together make contacts with the 16S rRNA in bridges B5 and B8.

Its function is as follows. Binds to 23S rRNA. Forms part of two intersubunit bridges in the 70S ribosome. The chain is Large ribosomal subunit protein uL14 from Wolinella succinogenes (strain ATCC 29543 / DSM 1740 / CCUG 13145 / JCM 31913 / LMG 7466 / NCTC 11488 / FDC 602W) (Vibrio succinogenes).